The chain runs to 108 residues: Nucleoid-associated protein GWCH70_0020 (108 aa).

Residues 1–34 (MMRGGMGNMQKMMKQMQKMQKEMQKAQEQLAEKT) form a disordered region. A compositionally biased stretch (low complexity) spans 9–18 (MQKMMKQMQK). Residues 19–34 (MQKEMQKAQEQLAEKT) are compositionally biased toward basic and acidic residues.

This sequence belongs to the YbaB/EbfC family. As to quaternary structure, homodimer.

The protein resides in the cytoplasm. It localises to the nucleoid. Its function is as follows. Binds to DNA and alters its conformation. May be involved in regulation of gene expression, nucleoid organization and DNA protection. The polypeptide is Nucleoid-associated protein GWCH70_0020 (Geobacillus sp. (strain WCH70)).